The chain runs to 46 residues: Cuticle protein 4.9 (46 aa).

Component of the cuticle of migratory locust which contains more than 100 different structural proteins. The polypeptide is Cuticle protein 4.9 (Locusta migratoria (Migratory locust)).